The primary structure comprises 145 residues: MTKIIIEVEVRPSEDENKVLQAIRNLFDFENLKEEKSGYTKILVAESHTLLSLQKFHRKLREERILDAARKYLTKNLIGNVITFMLNKQAAAVGKISFVDDEKESPLGPIKVTIEYKDPQALIDWLTPKTAKGVPLWENPIPSDE.

The protein belongs to the UPF0201 family.

The sequence is that of UPF0201 protein STK_09490 from Sulfurisphaera tokodaii (strain DSM 16993 / JCM 10545 / NBRC 100140 / 7) (Sulfolobus tokodaii).